We begin with the raw amino-acid sequence, 93 residues long: UPF0213 protein CPE1444 (93 aa).

The GIY-YIG domain occupies 1–75 (MNYVYILKCK…KKLTRNQKLQ (75 aa)).

This sequence belongs to the UPF0213 family.

The sequence is that of UPF0213 protein CPE1444 from Clostridium perfringens (strain 13 / Type A).